The sequence spans 171 residues: MEDLRNVIRDIPDFPKKGIVFKDITTLLADAKSFHRMVDLIAHRYIGQKIDQIVGVEARGFILGAALAYKLGTGITLVRKPGKLPYKTIQKTYQLEYGTDTLEIHSDAFKPGDRVVVADDLLATGGTVAAVAELVKECGAEIVECAFLAELEFLKGRERLPLDRVFSLLKF.

Belongs to the purine/pyrimidine phosphoribosyltransferase family. In terms of assembly, homodimer.

The protein resides in the cytoplasm. It carries out the reaction AMP + diphosphate = 5-phospho-alpha-D-ribose 1-diphosphate + adenine. It participates in purine metabolism; AMP biosynthesis via salvage pathway; AMP from adenine: step 1/1. Catalyzes a salvage reaction resulting in the formation of AMP, that is energically less costly than de novo synthesis. The polypeptide is Adenine phosphoribosyltransferase (Syntrophotalea carbinolica (strain DSM 2380 / NBRC 103641 / GraBd1) (Pelobacter carbinolicus)).